A 274-amino-acid polypeptide reads, in one-letter code: tRNA (mnm(5)s(2)U34)-methyltransferase, chloroplastic (274 aa).

A chloroplast-targeting transit peptide spans Met-1–Cys-50. Residues Asn-108, Asn-110, Asp-134, Gln-136, and His-166 each coordinate S-adenosyl-L-methionine.

The protein belongs to the methyltransferase superfamily. MnmM family.

The protein resides in the plastid. Its subcellular location is the chloroplast. The catalysed reaction is 5-aminomethyl-2-thiouridine(34) in tRNA + S-adenosyl-L-methionine = 5-methylaminomethyl-2-thiouridine(34) in tRNA + S-adenosyl-L-homocysteine + H(+). It participates in tRNA modification. Functionally, involved in the biosynthesis of 5-methylaminomethyl-2-thiouridine (mnm(5)s(2)U) at the wobble position (U34) in tRNA. Catalyzes the transfer of a methyl group from S-adenosyl-L-methionine to nm(5)s(2)U34 to form mnm(5)s(2)U34. This Arabidopsis thaliana (Mouse-ear cress) protein is tRNA (mnm(5)s(2)U34)-methyltransferase, chloroplastic.